Consider the following 241-residue polypeptide: Small ribosomal subunit protein bS6 (241 aa).

Residues 97-108 (KPKIRERNRKYT) show a composition bias toward basic residues. Residues 97-241 (KPKIRERNRK…YNNKKPQSSN (145 aa)) are disordered. Over residues 109–118 (LRRDRFDKPN) the composition is skewed to basic and acidic residues. 2 stretches are compositionally biased toward low complexity: residues 130 to 151 (QDQQ…QASQ) and 161 to 182 (DDFQ…NQSG). The span at 183–193 (YHRENNRHNQE) shows a compositional bias: basic and acidic residues. Positions 194-210 (NMHQNNKNHQNQTSQTQ) are enriched in low complexity.

The protein belongs to the bacterial ribosomal protein bS6 family.

In terms of biological role, binds together with bS18 to 16S ribosomal RNA. The sequence is that of Small ribosomal subunit protein bS6 from Mesomycoplasma hyopneumoniae (strain J / ATCC 25934 / NCTC 10110) (Mycoplasma hyopneumoniae).